A 238-amino-acid polypeptide reads, in one-letter code: SPEG neighbor protein (238 aa).

In terms of domain architecture, IQ spans 29-55; it reads QSAAIRIQASYRGHRSRKELREKGPPR. Ig-like domains follow at residues 54–143 and 147–236; these read PRVL…ARIL and PTKI…ARVD.

This is SPEG neighbor protein from Homo sapiens (Human).